Consider the following 270-residue polypeptide: 4-hydroxy-tetrahydrodipicolinate reductase (270 aa).

NAD(+) contacts are provided by residues 11-16 (GAGGRM) and Glu37. Arg38 lines the NADP(+) pocket. NAD(+) is bound by residues 101–103 (GTT) and 125–128 (APNM). The active-site Proton donor/acceptor is the His158. His159 lines the (S)-2,3,4,5-tetrahydrodipicolinate pocket. Lys162 acts as the Proton donor in catalysis. Position 168–169 (168–169 (GT)) interacts with (S)-2,3,4,5-tetrahydrodipicolinate.

The protein belongs to the DapB family.

The protein localises to the cytoplasm. It catalyses the reaction (S)-2,3,4,5-tetrahydrodipicolinate + NAD(+) + H2O = (2S,4S)-4-hydroxy-2,3,4,5-tetrahydrodipicolinate + NADH + H(+). The enzyme catalyses (S)-2,3,4,5-tetrahydrodipicolinate + NADP(+) + H2O = (2S,4S)-4-hydroxy-2,3,4,5-tetrahydrodipicolinate + NADPH + H(+). It participates in amino-acid biosynthesis; L-lysine biosynthesis via DAP pathway; (S)-tetrahydrodipicolinate from L-aspartate: step 4/4. Functionally, catalyzes the conversion of 4-hydroxy-tetrahydrodipicolinate (HTPA) to tetrahydrodipicolinate. This chain is 4-hydroxy-tetrahydrodipicolinate reductase, found in Shewanella sp. (strain ANA-3).